The following is a 123-amino-acid chain: Large ribosomal subunit protein bL17 (123 aa).

It belongs to the bacterial ribosomal protein bL17 family. As to quaternary structure, part of the 50S ribosomal subunit. Contacts protein L32.

The polypeptide is Large ribosomal subunit protein bL17 (Borrelia garinii subsp. bavariensis (strain ATCC BAA-2496 / DSM 23469 / PBi) (Borreliella bavariensis)).